The primary structure comprises 461 residues: UDP-N-acetylmuramate--L-alanine ligase (461 aa).

Residue 112–118 (GTHGKTT) coordinates ATP.

The protein belongs to the MurCDEF family.

The protein resides in the cytoplasm. The enzyme catalyses UDP-N-acetyl-alpha-D-muramate + L-alanine + ATP = UDP-N-acetyl-alpha-D-muramoyl-L-alanine + ADP + phosphate + H(+). It functions in the pathway cell wall biogenesis; peptidoglycan biosynthesis. Functionally, cell wall formation. This Geobacter sp. (strain M21) protein is UDP-N-acetylmuramate--L-alanine ligase.